Reading from the N-terminus, the 273-residue chain is Endoplasmic reticulum resident protein 27 (273 aa).

The signal sequence occupies residues 1–25 (MEAAPSRFMFLLFLLTCELAAEVAA). The 114-residue stretch at 39–152 (EPTWLTDVPA…MVTEYNPVTV (114 aa)) folds into the Thioredoxin domain. Asn100 carries N-linked (GlcNAc...) asparagine glycosylation. Residues 230–233 (DEWD) are PDIA3-binding site. Positions 270–273 (KVEL) match the Prevents secretion from ER motif.

Belongs to the protein disulfide isomerase family. In terms of assembly, interacts with PDIA3.

The protein localises to the endoplasmic reticulum lumen. Specifically binds unfolded proteins and may recruit protein disulfide isomerase PDIA3 to unfolded substrates. Binds protein substrates via a hydrophobic pocket in the C-terminal domain. May play a role in the unfolded stress response. This chain is Endoplasmic reticulum resident protein 27 (ERP27), found in Homo sapiens (Human).